The following is a 358-amino-acid chain: CX3C chemokine receptor 1 (358 aa).

Residues 1–26 lie on the Extracellular side of the membrane; the sequence is MHTTLPESTSENFEYYDLAEACDMGD. Residues 27–47 traverse the membrane as a helical segment; the sequence is IVALGTVFVVILYSLVFAFGL. Residues 48–68 are Cytoplasmic-facing; the sequence is VGNLLVVFALINSQRSKSITD. Residues 69 to 89 form a helical membrane-spanning segment; that stretch reads IYLLNLALSDLLFVATLPFWT. Residues 90 to 105 are Extracellular-facing; the sequence is HYVINEQGLHHATCKL. An intrachain disulfide couples Cys103 to Cys176. Residues 106–126 traverse the membrane as a helical segment; sequence ITAFFFIGFFGGIFFITVISV. The Cytoplasmic portion of the chain corresponds to 127 to 147; it reads DRFLAIVLAANSMSNRTVQHG. A helical membrane pass occupies residues 148-168; it reads VTTSLGVWAAAILVATPQFMF. Residues 169 to 186 lie on the Extracellular side of the membrane; that stretch reads TREKENECFGDYPEILQE. The chain crosses the membrane as a helical span at residues 187 to 207; it reads IWPVILNTEINFLGFLLPLLI. Topologically, residues 208–232 are cytoplasmic; the sequence is MSYCYFRIMQTLFSCKNHKKAKAIR. The helical transmembrane segment at 233 to 253 threads the bilayer; the sequence is LIFLVVVVFFLFWTPYNVMIF. Residues 254-275 are Extracellular-facing; it reads LQTLNLYDFFPKCDVKRDLKLA. The helical transmembrane segment at 276–296 threads the bilayer; sequence ISVTETIAFSHCCLNPLIYAF. The Cytoplasmic portion of the chain corresponds to 297–358; sequence AGEKFRRYLY…TSDGDASILL (62 aa). Thr349 is modified (phosphothreonine).

This sequence belongs to the G-protein coupled receptor 1 family. In terms of assembly, found in a ternary complex with CX3CL1 and ITGAV:ITGB3 or ITGA4:ITGB1. This protein is not N-glycosylated which is unusual for G-protein-coupled receptors.

It is found in the cell membrane. In terms of biological role, receptor for the C-X3-C chemokine fractalkine (CX3CL1) present on many early leukocyte cells; CX3CR1-CX3CL1 signaling exerts distinct functions in different tissue compartments, such as immune response, inflammation, cell adhesion and chemotaxis. CX3CR1-CX3CL1 signaling mediates cell migratory functions. Responsible for the recruitment of natural killer (NK) cells to inflamed tissues. Acts as a regulator of inflammation process leading to atherogenesis by mediating macrophage and monocyte recruitment to inflamed atherosclerotic plaques, promoting cell survival. Involved in airway inflammation by promoting interleukin 2-producing T helper (Th2) cell survival in inflamed lung. Involved in the migration of circulating monocytes to non-inflamed tissues, where they differentiate into macrophages and dendritic cells. Acts as a negative regulator of angiogenesis, probably by promoting macrophage chemotaxis. Plays a key role in brain microglia by regulating inflammatory response in the central nervous system (CNS) and regulating synapse maturation. Required to restrain the microglial inflammatory response in the CNS and the resulting parenchymal damage in response to pathological stimuli. Involved in brain development by participating in synaptic pruning, a natural process during which brain microglia eliminates extra synapses during postnatal development. Synaptic pruning by microglia is required to promote the maturation of circuit connectivity during brain development. Acts as an important regulator of the gut microbiota by controlling immunity to intestinal bacteria and fungi. Expressed in lamina propria dendritic cells in the small intestine, which form transepithelial dendrites capable of taking up bacteria in order to provide defense against pathogenic bacteria. Required to initiate innate and adaptive immune responses against dissemination of commensal fungi (mycobiota) component of the gut: expressed in mononuclear phagocytes (MNPs) and acts by promoting induction of antifungal IgG antibodies response to confer protection against disseminated C.albicans or C.auris infection. Also acts as a receptor for C-C motif chemokine CCL26, inducing cell chemotaxis. The sequence is that of CX3C chemokine receptor 1 from Bos taurus (Bovine).